The primary structure comprises 391 residues: Cystathionine beta-lyase MetC (391 aa).

Lys196 carries the N6-(pyridoxal phosphate)lysine modification.

Belongs to the trans-sulfuration enzymes family. As to quaternary structure, homotetramer. It depends on pyridoxal 5'-phosphate as a cofactor.

It catalyses the reaction L,L-cystathionine + H2O = L-homocysteine + pyruvate + NH4(+). The catalysed reaction is an S-substituted L-cysteine + H2O = a thiol + pyruvate + NH4(+). It participates in amino-acid biosynthesis; L-methionine biosynthesis via de novo pathway; L-homocysteine from L-cystathionine: step 1/1. With respect to regulation, cystathionine beta-lyase activity is inhibited by sweat components such as glycine, serine and ammonium sulfate. Inhibited by cystathionine at a concentration higher than 6 mM. Catalyzes the transformation of cystathionine into homocysteine. Can also catalyze, at low levels, the conversion of cystathionine into methionine and the conversion of methionine into methanethiol. The polypeptide is Cystathionine beta-lyase MetC (Staphylococcus haemolyticus (strain JCSC1435)).